We begin with the raw amino-acid sequence, 78 residues long: MDRYWEQDPMRPMVYRDFLGEMEYPGYSMPMQMEIDEDDFGPMDMQFEVGGISPFQMKPEDSDFFNKFEDDFDDSDIN.

Expressed in siliques and anthers.

Functionally, mediates responses to the synthetic auxin 2,4-dichlorophenoxyacetic acid (2,4-D). Not involved in the response to indole-3-acetic acid (IAA). May interact with RUB modification-related components and may regulate the culling-ring ubiquitin E3 ligase complex (CRL) activity. The protein is Small acidic protein 2 (SMAP2) of Arabidopsis thaliana (Mouse-ear cress).